A 249-amino-acid polypeptide reads, in one-letter code: MTSPSQVLPASAGKPTGPNADPKEIDKFSELAHHWWDPNSEFKPLHDLNPLRLGWIDGIAGLAGKKVVDIGCGGGILSESMARLGANVRGIDLSTKALRVADLHSLESGVAVNYEEIAAEALAAREPGSVDVVTCMEMLEHVPDPESIVQACATLVRPGGHVFVSTINRNLKAYLMAVVGAEYILQMLPRGTHDYEKFITPSEMARFARNAGLDLVEMRGMTYNPLSQIYSLSRDTDVNYMMAFRRVAE.

The segment at 1–23 is disordered; it reads MTSPSQVLPASAGKPTGPNADPK. S-adenosyl-L-methionine is bound by residues arginine 52, glycine 71, aspartate 92, and methionine 136.

It belongs to the methyltransferase superfamily. UbiG/COQ3 family.

It carries out the reaction a 3-demethylubiquinol + S-adenosyl-L-methionine = a ubiquinol + S-adenosyl-L-homocysteine + H(+). The catalysed reaction is a 3-(all-trans-polyprenyl)benzene-1,2-diol + S-adenosyl-L-methionine = a 2-methoxy-6-(all-trans-polyprenyl)phenol + S-adenosyl-L-homocysteine + H(+). The protein operates within cofactor biosynthesis; ubiquinone biosynthesis. O-methyltransferase that catalyzes the 2 O-methylation steps in the ubiquinone biosynthetic pathway. This is Ubiquinone biosynthesis O-methyltransferase from Cupriavidus pinatubonensis (strain JMP 134 / LMG 1197) (Cupriavidus necator (strain JMP 134)).